The sequence spans 489 residues: Argininosuccinate lyase (489 aa).

Positions 1–20 (MSEPSAAVGQRPGGESAPAH) are disordered.

Belongs to the lyase 1 family. Argininosuccinate lyase subfamily.

The protein resides in the cytoplasm. It carries out the reaction 2-(N(omega)-L-arginino)succinate = fumarate + L-arginine. It functions in the pathway amino-acid biosynthesis; L-arginine biosynthesis; L-arginine from L-ornithine and carbamoyl phosphate: step 3/3. The chain is Argininosuccinate lyase from Acidothermus cellulolyticus (strain ATCC 43068 / DSM 8971 / 11B).